The chain runs to 171 residues: Crossover junction endodeoxyribonuclease RuvC (171 aa).

Residues Asp-7, Glu-66, and Asp-138 contribute to the active site. Mg(2+) contacts are provided by Asp-7, Glu-66, and Asp-138.

Belongs to the RuvC family. In terms of assembly, homodimer which binds Holliday junction (HJ) DNA. The HJ becomes 2-fold symmetrical on binding to RuvC with unstacked arms; it has a different conformation from HJ DNA in complex with RuvA. In the full resolvosome a probable DNA-RuvA(4)-RuvB(12)-RuvC(2) complex forms which resolves the HJ. Requires Mg(2+) as cofactor.

The protein resides in the cytoplasm. It catalyses the reaction Endonucleolytic cleavage at a junction such as a reciprocal single-stranded crossover between two homologous DNA duplexes (Holliday junction).. The RuvA-RuvB-RuvC complex processes Holliday junction (HJ) DNA during genetic recombination and DNA repair. Endonuclease that resolves HJ intermediates. Cleaves cruciform DNA by making single-stranded nicks across the HJ at symmetrical positions within the homologous arms, yielding a 5'-phosphate and a 3'-hydroxyl group; requires a central core of homology in the junction. The consensus cleavage sequence is 5'-(A/T)TT(C/G)-3'. Cleavage occurs on the 3'-side of the TT dinucleotide at the point of strand exchange. HJ branch migration catalyzed by RuvA-RuvB allows RuvC to scan DNA until it finds its consensus sequence, where it cleaves and resolves the cruciform DNA. The protein is Crossover junction endodeoxyribonuclease RuvC of Francisella philomiragia subsp. philomiragia (strain ATCC 25017 / CCUG 19701 / FSC 153 / O#319-036).